The sequence spans 212 residues: Ion-translocating oxidoreductase complex subunit G (212 aa).

A helical transmembrane segment spans residues 9–29; sequence GLLLGLFALLCTGLVAIVNQL. T176 bears the FMN phosphoryl threonine mark.

This sequence belongs to the RnfG family. As to quaternary structure, the complex is composed of six subunits: RnfA, RnfB, RnfC, RnfD, RnfE and RnfG. The cofactor is FMN.

It localises to the cell inner membrane. Functionally, part of a membrane-bound complex that couples electron transfer with translocation of ions across the membrane. The polypeptide is Ion-translocating oxidoreductase complex subunit G (Shewanella piezotolerans (strain WP3 / JCM 13877)).